The primary structure comprises 402 residues: Type II NADH:quinone oxidoreductase (402 aa).

FAD contacts are provided by residues 12–16 (GAGYA), 39–40 (NK), and Val-83. The active site involves Glu-172. Residues Asp-302, 319–320 (AQ), and Lys-379 each bind FAD.

It belongs to the NADH dehydrogenase family. It depends on FAD as a cofactor.

Its subcellular location is the cell membrane. The enzyme catalyses a quinone + NADH + H(+) = a quinol + NAD(+). Alternative, nonproton pumping NADH:quinone oxidoreductase that delivers electrons to the respiratory chain by oxidation of NADH and reduction of quinones, and contributes to the regeneration of NAD(+). This Staphylococcus haemolyticus (strain JCSC1435) protein is Type II NADH:quinone oxidoreductase.